The primary structure comprises 329 residues: GTPase Obg (329 aa).

The region spanning 1 to 159 (MQFIDEAKIF…MWVWLHLKLL (159 aa)) is the Obg domain. Positions 160–327 (SDVGLVGLPN…LLANILSELQ (168 aa)) constitute an OBG-type G domain. Residues 166–173 (GLPNAGKS), 191–195 (FTTLT), 212–215 (DIPG), 279–282 (TKTD), and 308–310 (SSY) contribute to the GTP site. The Mg(2+) site is built by Ser-173 and Thr-193.

It belongs to the TRAFAC class OBG-HflX-like GTPase superfamily. OBG GTPase family. As to quaternary structure, monomer. Mg(2+) is required as a cofactor.

The protein resides in the cytoplasm. In terms of biological role, an essential GTPase which binds GTP, GDP and possibly (p)ppGpp with moderate affinity, with high nucleotide exchange rates and a fairly low GTP hydrolysis rate. Plays a role in control of the cell cycle, stress response, ribosome biogenesis and in those bacteria that undergo differentiation, in morphogenesis control. This is GTPase Obg from Orientia tsutsugamushi (strain Boryong) (Rickettsia tsutsugamushi).